Here is a 232-residue protein sequence, read N- to C-terminus: Lipoprotein-releasing system ATP-binding protein LolD (232 aa).

One can recognise an ABC transporter domain in the interval I11–Y232. G47–S54 is a binding site for ATP.

It belongs to the ABC transporter superfamily. Lipoprotein translocase (TC 3.A.1.125) family. The complex is composed of two ATP-binding proteins (LolD) and two transmembrane proteins (LolC and LolE).

The protein resides in the cell inner membrane. In terms of biological role, part of the ABC transporter complex LolCDE involved in the translocation of mature outer membrane-directed lipoproteins, from the inner membrane to the periplasmic chaperone, LolA. Responsible for the formation of the LolA-lipoprotein complex in an ATP-dependent manner. The polypeptide is Lipoprotein-releasing system ATP-binding protein LolD (Zymomonas mobilis subsp. mobilis (strain ATCC 31821 / ZM4 / CP4)).